Here is a 353-residue protein sequence, read N- to C-terminus: uncharacterized protein (353 aa).

The protein belongs to the mimivirus L17x/L18x family.

This is an uncharacterized protein from Acanthamoeba polyphaga (Amoeba).